The sequence spans 424 residues: 5,5'-dehydrodivanillate O-demethylase oxygenase subunit (424 aa).

In terms of domain architecture, Rieske spans 27-135 (WHPIGGESEF…VRALGGLLWA (109 aa)). [2Fe-2S] cluster-binding residues include cysteine 68, histidine 70, cysteine 87, and histidine 90. Residues histidine 181, histidine 186, and aspartate 306 each contribute to the Fe cation site.

Belongs to the bacterial ring-hydroxylating dioxygenase alpha subunit family. As to quaternary structure, homotrimer. The three-component monooxygenase is composed of an oxygenase (LigXa), a ferredoxin (LigXc) and a ferredoxin reductase (LigXd). Requires [2Fe-2S] cluster as cofactor. Fe cation is required as a cofactor.

It carries out the reaction 5,5'-dehydrodivanillate + NADH + O2 + H(+) = 2,2',3-trihydroxy-3'-methoxy-5,5'-dicarboxybiphenyl + formaldehyde + NAD(+) + H2O. In terms of biological role, involved in the catabolism of 5,5'-dehydrodivanillate (DDVA), an intermediate in the biodegradation of lignin. Part of a three-component monooxygenase that catalyzes the O-demethylation of DDVA, leading to the formation of 2,2',3-trihydroxy-3'-methoxy-5,5'-dicarboxybiphenyl (OH-DDVA). This Sphingobium sp. (strain NBRC 103272 / SYK-6) protein is 5,5'-dehydrodivanillate O-demethylase oxygenase subunit.